Reading from the N-terminus, the 1120-residue chain is Hachiman protein HamB (1120 aa).

Residues aspartate 278–arginine 452 enclose the Helicase ATP-binding domain. Methionine 291–threonine 298 contributes to the ATP binding site. The DEAH box signature appears at aspartate 395 to histidine 398. Residues alanine 521–tyrosine 710 form the Helicase C-terminal domain.

Belongs to the helicase family.

In terms of biological role, component of antiviral defense system Hachiman, composed of HamA and HamB. Expression of Hachiman in B.subtilis (strain BEST7003) confers resistance to phages phi105, phi29, phi3T, rho14, SBSphiJ, SpBeta and SPR. Probably a helicase. This is Hachiman protein HamB from Bacillus cereus.